A 72-amino-acid chain; its full sequence is Gas vesicle protein A (72 aa).

This sequence belongs to the gas vesicle GvpA family. In terms of assembly, the gas vesicle shell is 2 nm thick and consists of a single layer of this protein. It forms helical ribs nearly perpendicular to the long axis of the vesicle.

Its subcellular location is the gas vesicle shell. Its function is as follows. Gas vesicles are hollow, gas filled proteinaceous nanostructures found in some microorganisms. During planktonic growth they allow positioning of the organism at a favorable depth for light or nutrient acquisition. GvpA forms the protein shell. This is Gas vesicle protein A from Haloquadratum walsbyi (strain DSM 16790 / HBSQ001).